Here is a 40-residue protein sequence, read N- to C-terminus: Probable non-specific lipid-transfer protein (40 aa).

This sequence belongs to the plant LTP family. Post-translationally, phosphorylated by Ca(2+)-dependent protein kinase.

Functionally, plant non-specific lipid-transfer proteins transfer phospholipids as well as galactolipids across membranes. May play a role in wax or cutin deposition in the cell walls of expanding epidermal cells and certain secretory tissues. The polypeptide is Probable non-specific lipid-transfer protein (Triticum aestivum (Wheat)).